Here is an 85-residue protein sequence, read N- to C-terminus: Large ribosomal subunit protein uL23 (85 aa).

Belongs to the universal ribosomal protein uL23 family. In terms of assembly, part of the 50S ribosomal subunit. Interacts with protein L29 and weakly with protein L39e.

Functionally, binds to a specific region on the 23S rRNA. Located at the polypeptide exit tunnel on the outside of the subunit. This Haloarcula marismortui (strain ATCC 43049 / DSM 3752 / JCM 8966 / VKM B-1809) (Halobacterium marismortui) protein is Large ribosomal subunit protein uL23.